Consider the following 160-residue polypeptide: Protein-export protein SecB (160 aa).

Belongs to the SecB family. As to quaternary structure, homotetramer, a dimer of dimers. One homotetramer interacts with 1 SecA dimer.

Its subcellular location is the cytoplasm. Its function is as follows. One of the proteins required for the normal export of preproteins out of the cell cytoplasm. It is a molecular chaperone that binds to a subset of precursor proteins, maintaining them in a translocation-competent state. It also specifically binds to its receptor SecA. This is Protein-export protein SecB from Azorhizobium caulinodans (strain ATCC 43989 / DSM 5975 / JCM 20966 / LMG 6465 / NBRC 14845 / NCIMB 13405 / ORS 571).